A 217-amino-acid chain; its full sequence is MALFGFGKKLTLPTPETALPGRRQAMPVPASHYVNGHPLKPPFPSGLETAMFGLGCFWGAERKFWQCEGVYTTAVGYAAGITPNPTYQEVCTGLTGHNEVVLVVFDPKIISYEELLKVFWESHNPTQGMRQGNDVGTQYRSGIYVYSPQHKKAAETSKEVYQKALNQAGYGDITTEILDAPEFYYAEDYHQQYLAKNPNGYCGLGGTNVSCPIGLNV.

The active site involves cysteine 56.

Belongs to the MsrA Met sulfoxide reductase family.

The catalysed reaction is L-methionyl-[protein] + [thioredoxin]-disulfide + H2O = L-methionyl-(S)-S-oxide-[protein] + [thioredoxin]-dithiol. It catalyses the reaction [thioredoxin]-disulfide + L-methionine + H2O = L-methionine (S)-S-oxide + [thioredoxin]-dithiol. Its function is as follows. Has an important function as a repair enzyme for proteins that have been inactivated by oxidation. Catalyzes the reversible oxidation-reduction of methionine sulfoxide in proteins to methionine. The chain is Peptide methionine sulfoxide reductase MsrA from Rippkaea orientalis (strain PCC 8801 / RF-1) (Cyanothece sp. (strain PCC 8801)).